Reading from the N-terminus, the 310-residue chain is Upstream stimulatory factor 1 (310 aa).

Positions 1–17 (MKGQQKTAETEEGTVQI) are enriched in polar residues. Disordered stretches follow at residues 1–26 (MKGQ…ATGE) and 171–209 (QGGS…EVER). Residues 194-209 (TTRDEKRRAQHNEVER) show a composition bias toward basic and acidic residues. One can recognise a bHLH domain in the interval 199–254 (KRRAQHNEVERRRRDKINNWIVQLSKIIPDCSMESTKSGQSKGGILSKACDYIQEL). Residues 271–292 (LQLDNDVLRQQVEDLKNKNLLL) form a leucine-zipper region. Lysine 306 is covalently cross-linked (Glycyl lysine isopeptide (Lys-Gly) (interchain with G-Cter in SUMO2)).

Efficient DNA binding requires dimerization with another bHLH protein. Binds DNA as a homodimer or a heterodimer (USF1/USF2).

Its subcellular location is the nucleus. Its function is as follows. Transcription factor that binds to a symmetrical DNA sequence (E-boxes) (5'-CACGTG-3') that is found in a variety of viral and cellular promoters. Regulates the expression of the surfactant protein-A (SP-A) gene. This chain is Upstream stimulatory factor 1 (USF1), found in Oryctolagus cuniculus (Rabbit).